A 393-amino-acid polypeptide reads, in one-letter code: NAD(P)H-quinone oxidoreductase subunit H, chloroplastic (393 aa).

The protein belongs to the complex I 49 kDa subunit family. NDH is composed of at least 16 different subunits, 5 of which are encoded in the nucleus.

Its subcellular location is the plastid. It is found in the chloroplast thylakoid membrane. It carries out the reaction a plastoquinone + NADH + (n+1) H(+)(in) = a plastoquinol + NAD(+) + n H(+)(out). The catalysed reaction is a plastoquinone + NADPH + (n+1) H(+)(in) = a plastoquinol + NADP(+) + n H(+)(out). In terms of biological role, NDH shuttles electrons from NAD(P)H:plastoquinone, via FMN and iron-sulfur (Fe-S) centers, to quinones in the photosynthetic chain and possibly in a chloroplast respiratory chain. The immediate electron acceptor for the enzyme in this species is believed to be plastoquinone. Couples the redox reaction to proton translocation, and thus conserves the redox energy in a proton gradient. This is NAD(P)H-quinone oxidoreductase subunit H, chloroplastic from Gossypium barbadense (Sea Island cotton).